The following is a 116-amino-acid chain: Ribosome-binding factor A (116 aa).

Belongs to the RbfA family. Monomer. Binds 30S ribosomal subunits, but not 50S ribosomal subunits or 70S ribosomes.

Its subcellular location is the cytoplasm. Functionally, one of several proteins that assist in the late maturation steps of the functional core of the 30S ribosomal subunit. Associates with free 30S ribosomal subunits (but not with 30S subunits that are part of 70S ribosomes or polysomes). Required for efficient processing of 16S rRNA. May interact with the 5'-terminal helix region of 16S rRNA. This Streptococcus pneumoniae (strain Hungary19A-6) protein is Ribosome-binding factor A.